The following is a 316-amino-acid chain: Leucine-rich repeat-containing protein 73 (316 aa).

LRR repeat units follow at residues 57-78, 86-106, 114-137, 145-166, 174-187, 202-223, and 231-250; these read SLAQ…KQLA, SIQS…ALLN, ALVA…CGLL, GLKE…SRLA, QVRV…PLGD, TLEV…TLLD, and ALRS…QQQI. The segment at 257–296 is disordered; it reads GEEEEEMAGGAADTQEWGRGREPAAHQRGGSSWKCPSDPN. Basic and acidic residues predominate over residues 272 to 281; sequence EWGRGREPAA.

This chain is Leucine-rich repeat-containing protein 73 (Lrrc73), found in Rattus norvegicus (Rat).